The primary structure comprises 406 residues: Testis-specific Y-encoded-like protein 5 (406 aa).

The span at 1-25 (MSGRSRGRKSSRAKGRGKGRARARV) shows a compositional bias: basic residues. Disordered stretches follow at residues 1–67 (MSGR…PAEL), 132–164 (IGNRRVPGRKAPDTRSATGRGPQATVSGKPKMA), and 382–406 (RGEKGKEERPGPAKLSPAPAVRQPN). Basic and acidic residues predominate over residues 27–38 (AAAEDAWHDEKP). Residues 49-62 (AAAQVQAGAAQGGA) are compositionally biased toward low complexity. The span at 382 to 392 (RGEKGKEERPG) shows a compositional bias: basic and acidic residues.

The protein belongs to the nucleosome assembly protein (NAP) family. Interacts with USP7.

Functionally, involved in modulation of cell growth and cellular response to gamma radiation probably via regulation of the Akt signaling pathway. Involved in regulation of p53/TP53. Suppresses p53/TP53 protein levels and promotes its ubiquitination; the function is dependent on USP7 and independent on MDM2. Proposed to displace p53/TP53 from interaction with USP7. The polypeptide is Testis-specific Y-encoded-like protein 5 (Tspyl5) (Mus musculus (Mouse)).